A 103-amino-acid polypeptide reads, in one-letter code: MYAVIVTGGKQHKVTEGEFLKVEKLDVATGEAIDFDRVLLVANGEDVKIGLPVVEGAKVTAEVVSHGRHDKVRIIKFRRRKHHMKRQGHRQWFTEIKITGIQA.

Belongs to the bacterial ribosomal protein bL21 family. As to quaternary structure, part of the 50S ribosomal subunit. Contacts protein L20.

Functionally, this protein binds to 23S rRNA in the presence of protein L20. The polypeptide is Large ribosomal subunit protein bL21 (Pseudomonas aeruginosa (strain LESB58)).